The sequence spans 451 residues: Phosphoglucosamine mutase (451 aa).

The active-site Phosphoserine intermediate is serine 101. Mg(2+)-binding residues include serine 101, aspartate 243, aspartate 245, and aspartate 247. Position 101 is a phosphoserine (serine 101).

This sequence belongs to the phosphohexose mutase family. Mg(2+) is required as a cofactor. In terms of processing, activated by phosphorylation.

It catalyses the reaction alpha-D-glucosamine 1-phosphate = D-glucosamine 6-phosphate. Its function is as follows. Catalyzes the conversion of glucosamine-6-phosphate to glucosamine-1-phosphate. The chain is Phosphoglucosamine mutase from Thermodesulfovibrio yellowstonii (strain ATCC 51303 / DSM 11347 / YP87).